The primary structure comprises 345 residues: Mannonate dehydratase 2 (345 aa).

It belongs to the mannonate dehydratase family. Fe(2+) is required as a cofactor. Requires Mn(2+) as cofactor.

The enzyme catalyses D-mannonate = 2-dehydro-3-deoxy-D-gluconate + H2O. It functions in the pathway carbohydrate metabolism; pentose and glucuronate interconversion. Functionally, catalyzes the dehydration of D-mannonate. The polypeptide is Mannonate dehydratase 2 (uxuA2) (Halalkalibacterium halodurans (strain ATCC BAA-125 / DSM 18197 / FERM 7344 / JCM 9153 / C-125) (Bacillus halodurans)).